We begin with the raw amino-acid sequence, 773 residues long: Photosystem I P700 chlorophyll a apoprotein A1 (773 aa).

The interval 1–27 (MTISPPERGEKAKGAAPTPYDQPVDRD) is disordered. 8 helical membrane-spanning segments follow: residues 80 to 103 (IFSAHFGHLAVVFIWMSAAFFHGA), 166 to 189 (LMALAIGGVIMAALMLHGGIYHYH), 205 to 229 (LQHHQIALIGLGSIAWAGHLIHIGA), 315 to 333 (ISHHHLAFGVFAIFGGHMW), 375 to 398 (WHGQLSINLAMVGSASIVVAHHMY), 414 to 440 (LGLFTHHMWIGGLFICGAAAHAGIAMI), 462 to 484 (AIISHLNWVCMWLGFHSFGLYIH), and 564 to 582 (LMIHHVHAFTIHVTLLILL). [4Fe-4S] cluster contacts are provided by Cys-606 and Cys-615. 2 consecutive transmembrane segments (helical) span residues 622–643 (HVFLGLFWMYNSLSVVIFHFSW) and 687–709 (ISMYGLMFLGAHFVWAFSLMFLF). His-698 is a binding site for divinylchlorophyll a'. Divinyl chlorophyll a contacts are provided by Met-706 and Tyr-714. Trp-715 serves as a coordination point for phylloquinone. The chain crosses the membrane as a helical span at residues 747–767 (AVGVAHFLLGGIATTWAFFHA).

It belongs to the PsaA/PsaB family. The PsaA/B heterodimer binds the P700 divinyl chlorophyll special pair and subsequent electron acceptors. PSI consists of a core antenna complex that captures photons, and an electron transfer chain that converts photonic excitation into a charge separation. The cyanobacterial PSI reaction center is composed of one copy each of PsaA,B,C,D,E,F,I,J,K,L,M and X, and forms trimeric complexes. The cofactor is PSI electron transfer chain: 5 divinyl chlorophyll a, 1 divinyl chlorophyll a', 2 phylloquinones and 3 4Fe-4S clusters. PSI core antenna: 90 divinyl chlorophyll a, 22 carotenoids, 3 phospholipids and 1 galactolipid. P700 is a divinyl chlorophyll a/divinyl chlorophyll a' dimer, A0 is one or more divinylchlorophyll a, A1 is one or both phylloquinones and FX is a shared 4Fe-4S iron-sulfur center..

The protein resides in the cellular thylakoid membrane. It catalyses the reaction reduced [plastocyanin] + hnu + oxidized [2Fe-2S]-[ferredoxin] = oxidized [plastocyanin] + reduced [2Fe-2S]-[ferredoxin]. Functionally, psaA and PsaB bind P700, the primary electron donor of photosystem I (PSI), as well as the electron acceptors A0, A1 and FX. PSI is a plastocyanin/cytochrome c6-ferredoxin oxidoreductase, converting photonic excitation into a charge separation, which transfers an electron from the donor P700 chlorophyll pair to the spectroscopically characterized acceptors A0, A1, FX, FA and FB in turn. Oxidized P700 is reduced on the lumenal side of the thylakoid membrane by plastocyanin or cytochrome c6. The chain is Photosystem I P700 chlorophyll a apoprotein A1 from Prochlorococcus marinus (strain SARG / CCMP1375 / SS120).